The sequence spans 396 residues: Adenosine deaminase 1 (396 aa).

Residues 1-26 are disordered; it reads MTSRSTEKSAAANPAAVSKTPSPDRI. 2 residues coordinate Zn(2+): His35 and His37. Substrate contacts are provided by His37, Asp39, and Gly197. His224 is a binding site for Zn(2+). Glu227 serves as the catalytic Proton donor. Residue Asp316 participates in Zn(2+) binding.

Belongs to the metallo-dependent hydrolases superfamily. Adenosine and AMP deaminases family. Adenosine deaminase subfamily. In terms of assembly, homotetramer. Zn(2+) serves as cofactor.

It carries out the reaction adenosine + H2O + H(+) = inosine + NH4(+). The catalysed reaction is 2'-deoxyadenosine + H2O + H(+) = 2'-deoxyinosine + NH4(+). With respect to regulation, coformycin and 2'-deoxycoformycin, whose structures mimic the transition state of the deamination reaction, are potent competitive inhibitors. In terms of biological role, catalyzes the hydrolytic deamination of adenosine and 2-deoxyadenosine. This Streptomyces coelicolor (strain ATCC BAA-471 / A3(2) / M145) protein is Adenosine deaminase 1.